We begin with the raw amino-acid sequence, 77 residues long: UPF0349 protein lwe2340 (77 aa).

This sequence belongs to the UPF0349 family.

The polypeptide is UPF0349 protein lwe2340 (Listeria welshimeri serovar 6b (strain ATCC 35897 / DSM 20650 / CCUG 15529 / CIP 8149 / NCTC 11857 / SLCC 5334 / V8)).